We begin with the raw amino-acid sequence, 706 residues long: Termination factor NPH-I homolog (706 aa).

A Helicase ATP-binding domain is found at 62–227 (IGQGENTRGL…VPCFNMLSGR (166 aa)). 75–82 (HQMGMGKT) is a binding site for ATP. Residues 168-171 (DEAH) carry the DEAH box motif. Residues 417 to 599 (QCLQPLKVLE…HLNSAFRDLL (183 aa)) enclose the Helicase C-terminal domain.

Belongs to the DEAD box helicase family. DEAH subfamily. Part of the viral DNA-directed RNA polymerase that consists of 8 polII-like subunits (RPB1, RPB2, RPB3, RPB5, RPB6, RPB7, RPB9, RPB10), a capping enzyme and a termination factor.

It is found in the virion. Functionally, putative DNA-dependent ATPase required for providing the needed energy to achieve the termination of early transcripts. In African swine fever virus (isolate Warthog/Namibia/Wart80/1980) (ASFV), this protein is Termination factor NPH-I homolog.